The following is a 497-amino-acid chain: 3-octaprenyl-4-hydroxybenzoate carboxy-lyase (497 aa).

Asn175 serves as a coordination point for Mn(2+). Prenylated FMN is bound by residues 178–180 (IYR), 192–194 (RWL), and 197–198 (RG). A Mn(2+)-binding site is contributed by Glu241. Residue Asp290 is the Proton donor of the active site.

This sequence belongs to the UbiD family. Homohexamer. Prenylated FMN is required as a cofactor. Mn(2+) serves as cofactor.

The protein localises to the cell membrane. It catalyses the reaction a 4-hydroxy-3-(all-trans-polyprenyl)benzoate + H(+) = a 2-(all-trans-polyprenyl)phenol + CO2. It functions in the pathway cofactor biosynthesis; ubiquinone biosynthesis. Catalyzes the decarboxylation of 3-octaprenyl-4-hydroxy benzoate to 2-octaprenylphenol, an intermediate step in ubiquinone biosynthesis. In Shigella boydii serotype 4 (strain Sb227), this protein is 3-octaprenyl-4-hydroxybenzoate carboxy-lyase.